The sequence spans 383 residues: Queuine tRNA-ribosyltransferase (383 aa).

Residue D95 is the Proton acceptor of the active site. Residues 95–99 (DSGGF), D149, Q195, and G222 contribute to the substrate site. Residues 253 to 259 (GVGSPDS) are RNA binding. The active-site Nucleophile is the D272. Residues 277-281 (TRIAR) are RNA binding; important for wobble base 34 recognition. Zn(2+) is bound by residues C310, C312, C315, and H341.

The protein belongs to the queuine tRNA-ribosyltransferase family. As to quaternary structure, homodimer. Within each dimer, one monomer is responsible for RNA recognition and catalysis, while the other monomer binds to the replacement base PreQ1. The cofactor is Zn(2+).

It carries out the reaction 7-aminomethyl-7-carbaguanine + guanosine(34) in tRNA = 7-aminomethyl-7-carbaguanosine(34) in tRNA + guanine. It participates in tRNA modification; tRNA-queuosine biosynthesis. In terms of biological role, catalyzes the base-exchange of a guanine (G) residue with the queuine precursor 7-aminomethyl-7-deazaguanine (PreQ1) at position 34 (anticodon wobble position) in tRNAs with GU(N) anticodons (tRNA-Asp, -Asn, -His and -Tyr). Catalysis occurs through a double-displacement mechanism. The nucleophile active site attacks the C1' of nucleotide 34 to detach the guanine base from the RNA, forming a covalent enzyme-RNA intermediate. The proton acceptor active site deprotonates the incoming PreQ1, allowing a nucleophilic attack on the C1' of the ribose to form the product. After dissociation, two additional enzymatic reactions on the tRNA convert PreQ1 to queuine (Q), resulting in the hypermodified nucleoside queuosine (7-(((4,5-cis-dihydroxy-2-cyclopenten-1-yl)amino)methyl)-7-deazaguanosine). The sequence is that of Queuine tRNA-ribosyltransferase from Shouchella clausii (strain KSM-K16) (Alkalihalobacillus clausii).